The following is a 245-amino-acid chain: Biosynthetic peptidoglycan transglycosylase (245 aa).

A helical transmembrane segment spans residues 10–30 (FLALLFVVATLAQLWYLGQVL). Residues 224 to 245 (DPGTVPLPPPPEPTAPPEGNTQ) form a disordered region. Pro residues predominate over residues 226 to 239 (GTVPLPPPPEPTAP).

Belongs to the glycosyltransferase 51 family.

Its subcellular location is the cell inner membrane. The enzyme catalyses [GlcNAc-(1-&gt;4)-Mur2Ac(oyl-L-Ala-gamma-D-Glu-L-Lys-D-Ala-D-Ala)](n)-di-trans,octa-cis-undecaprenyl diphosphate + beta-D-GlcNAc-(1-&gt;4)-Mur2Ac(oyl-L-Ala-gamma-D-Glu-L-Lys-D-Ala-D-Ala)-di-trans,octa-cis-undecaprenyl diphosphate = [GlcNAc-(1-&gt;4)-Mur2Ac(oyl-L-Ala-gamma-D-Glu-L-Lys-D-Ala-D-Ala)](n+1)-di-trans,octa-cis-undecaprenyl diphosphate + di-trans,octa-cis-undecaprenyl diphosphate + H(+). The protein operates within cell wall biogenesis; peptidoglycan biosynthesis. Its function is as follows. Peptidoglycan polymerase that catalyzes glycan chain elongation from lipid-linked precursors. This chain is Biosynthetic peptidoglycan transglycosylase, found in Alcanivorax borkumensis (strain ATCC 700651 / DSM 11573 / NCIMB 13689 / SK2).